A 371-amino-acid chain; its full sequence is Chaperone protein DnaJ (371 aa).

The J domain occupies Asp4–Gly68. A CR-type zinc finger spans residues Gly134 to Gln212. Positions 147, 150, 164, 167, 186, 189, 200, and 203 each coordinate Zn(2+). CXXCXGXG motif repeat units follow at residues Cys147–Gly154, Cys164–Gly171, Cys186–Gly193, and Cys200–Gly207.

This sequence belongs to the DnaJ family. Homodimer. Requires Zn(2+) as cofactor.

The protein resides in the cytoplasm. Its function is as follows. Participates actively in the response to hyperosmotic and heat shock by preventing the aggregation of stress-denatured proteins and by disaggregating proteins, also in an autonomous, DnaK-independent fashion. Unfolded proteins bind initially to DnaJ; upon interaction with the DnaJ-bound protein, DnaK hydrolyzes its bound ATP, resulting in the formation of a stable complex. GrpE releases ADP from DnaK; ATP binding to DnaK triggers the release of the substrate protein, thus completing the reaction cycle. Several rounds of ATP-dependent interactions between DnaJ, DnaK and GrpE are required for fully efficient folding. Also involved, together with DnaK and GrpE, in the DNA replication of plasmids through activation of initiation proteins. This Rickettsia felis (strain ATCC VR-1525 / URRWXCal2) (Rickettsia azadi) protein is Chaperone protein DnaJ.